The primary structure comprises 395 residues: ATP phosphoribosyltransferase regulatory subunit (395 aa).

It belongs to the class-II aminoacyl-tRNA synthetase family. HisZ subfamily. As to quaternary structure, heteromultimer composed of HisG and HisZ subunits.

It is found in the cytoplasm. The protein operates within amino-acid biosynthesis; L-histidine biosynthesis; L-histidine from 5-phospho-alpha-D-ribose 1-diphosphate: step 1/9. Functionally, required for the first step of histidine biosynthesis. May allow the feedback regulation of ATP phosphoribosyltransferase activity by histidine. In Pseudomonas entomophila (strain L48), this protein is ATP phosphoribosyltransferase regulatory subunit.